The following is a 262-amino-acid chain: Tryptophan synthase alpha chain (262 aa).

Residues glutamate 52 and aspartate 63 each act as proton acceptor in the active site.

The protein belongs to the TrpA family. Tetramer of two alpha and two beta chains.

The catalysed reaction is (1S,2R)-1-C-(indol-3-yl)glycerol 3-phosphate + L-serine = D-glyceraldehyde 3-phosphate + L-tryptophan + H2O. It functions in the pathway amino-acid biosynthesis; L-tryptophan biosynthesis; L-tryptophan from chorismate: step 5/5. Functionally, the alpha subunit is responsible for the aldol cleavage of indoleglycerol phosphate to indole and glyceraldehyde 3-phosphate. In Mycobacteroides abscessus (strain ATCC 19977 / DSM 44196 / CCUG 20993 / CIP 104536 / JCM 13569 / NCTC 13031 / TMC 1543 / L948) (Mycobacterium abscessus), this protein is Tryptophan synthase alpha chain.